A 190-amino-acid polypeptide reads, in one-letter code: Selenoprotein S (190 aa).

The helical transmembrane segment at 28–48 (SLLASYGWYILFSCILLYIVI) threads the bilayer. Residues 78–90 (RQEALAAARLRMQ) form a VCP/p97-interacting motif (VIM) region. The interval 115-190 (KIEMWDSMQE…RRGPSSGGUN (76 aa)) is disordered. A compositionally biased stretch (gly residues) spans 160 to 174 (RGGGYNPLTGEGGGT). Residue selenocysteine 189 is a non-standard amino acid, selenocysteine.

Belongs to the selenoprotein S family. As to quaternary structure, interacts with DERL1 and (via VIM motif) with VCP, suggesting that it forms a membrane complex with DERL1 that serves as a receptor for VCP. Also interacts with DERL2, DERL3 and SELENOK. The SELENOK-SELENOS complex interacts with VCP. Interacts with CCDC47. Truncated SELENOS proteins produced by failed UGA/Sec decoding are ubiquitinated by the CRL2(KLHDC2) and CRL2(KLHDC3) complexes, which recognizes the glycine (Gly) at the C-terminus of truncated SELENOS proteins. Truncated SELENOS proteins produced by failed UGA/Sec decoding are also ubiquitinated by the CRL5(KLHDC1) complex.

It localises to the endoplasmic reticulum membrane. The protein resides in the cytoplasm. In terms of biological role, involved in the degradation process of misfolded endoplasmic reticulum (ER) luminal proteins. Participates in the transfer of misfolded proteins from the ER to the cytosol, where they are destroyed by the proteasome in a ubiquitin-dependent manner. Probably acts by serving as a linker between DERL1, which mediates the retrotranslocation of misfolded proteins into the cytosol, and the ATPase complex VCP, which mediates the translocation and ubiquitination. This Mus musculus (Mouse) protein is Selenoprotein S.